The chain runs to 103 residues: Integration host factor subunit beta (103 aa).

Belongs to the bacterial histone-like protein family. In terms of assembly, heterodimer of an alpha and a beta chain.

Its function is as follows. This protein is one of the two subunits of integration host factor, a specific DNA-binding protein that functions in genetic recombination as well as in transcriptional and translational control. The polypeptide is Integration host factor subunit beta (Bradyrhizobium sp. (strain BTAi1 / ATCC BAA-1182)).